A 504-amino-acid chain; its full sequence is DnaJ homolog subfamily C member 3 (504 aa).

An N-terminal signal peptide occupies residues 1-31; it reads MVAPGSVRSRLGAVFPFLLVLVDLQYEGAEC. 9 TPR repeats span residues 37–70, 72–104, 105–138, 154–187, 188–221, 222–255, 268–301, 306–339, and 340–373; these read VEKHLELGKKLLAAGQLADALSQFHAAVDGDPDN, IAYYRRATVFLAMGKSKAALPDLTRVIELKMDF, TAARLQRGHLLLKQGRLAEAEDDFKKVLKSNPSE, MQRLRAQALDAFDSADYTAAITFLDEILEVCVWD, AELRELRAECFIKEGEPRKAISDLKAASKLKNDN, TEAFYKISILYYQLGDHELSLSEVRECLKLDQDH, LNKLIGSAEELIRDGRYTDATSKYESVMKAEPSV, VRSKERICHCFSKDEKPVEAIKICSEVLQLEPDN, and VNALKDRAEAYLIEEMYDEAIQDYEAAQEQNEND. C248 and C258 form a disulfide bridge. S274 carries the post-translational modification Phosphoserine. C313 and C329 are oxidised to a cystine. A flexible linker region spans residues 375-393; it reads QIREGLEKAQRLLKQSQKR. In terms of domain architecture, J spans 394 to 462; the sequence is DYYKILGVKR…EMRRKFDDGE (69 aa). The segment at 451 to 481 is disordered; that stretch reads DPEMRRKFDDGEDPLDAETQQGGGSNPFHRS. S475 bears the Phosphoserine mark.

As to quaternary structure, interacts with EIF2AK2 and EIF2AK3. Forms a trimeric complex with DNAJB1 and HSPA8. Interacts with THAP12.

The protein localises to the endoplasmic reticulum. Its function is as follows. Involved in the unfolded protein response (UPR) during ER stress. Co-chaperone of HSPA8/HSC70, it stimulates its ATPase activity. May inhibit both the autophosphorylation of EIF2AK2/PKR and the ability of EIF2AK2 to catalyze phosphorylation of the EIF2A. May inhibit EIF2AK3/PERK activity. In Rattus norvegicus (Rat), this protein is DnaJ homolog subfamily C member 3 (Dnajc3).